The sequence spans 424 residues: Histidine--tRNA ligase (424 aa).

The protein belongs to the class-II aminoacyl-tRNA synthetase family. As to quaternary structure, homodimer.

It is found in the cytoplasm. It catalyses the reaction tRNA(His) + L-histidine + ATP = L-histidyl-tRNA(His) + AMP + diphosphate + H(+). The sequence is that of Histidine--tRNA ligase from Salmonella arizonae (strain ATCC BAA-731 / CDC346-86 / RSK2980).